The following is a 211-amino-acid chain: N-(5'-phosphoribosyl)anthranilate isomerase (211 aa).

It belongs to the TrpF family.

It catalyses the reaction N-(5-phospho-beta-D-ribosyl)anthranilate = 1-(2-carboxyphenylamino)-1-deoxy-D-ribulose 5-phosphate. It participates in amino-acid biosynthesis; L-tryptophan biosynthesis; L-tryptophan from chorismate: step 3/5. The chain is N-(5'-phosphoribosyl)anthranilate isomerase from Hyphomonas neptunium (strain ATCC 15444).